A 257-amino-acid polypeptide reads, in one-letter code: Homeobox protein goosecoid (257 aa).

Residues 160 to 219 (KRRHRTIFTDEQLEALENLFQETKYPDVGTREQLARKVHLREEKVEVWFKNRRAKWRRQK) constitute a DNA-binding region (homeobox). The interval 213–257 (AKWRRQKRSSSEESENAEKWNKTSSSKASPEKREEEGKSDLDSDS) is disordered. The span at 241 to 257 (SPEKREEEGKSDLDSDS) shows a compositional bias: basic and acidic residues.

Belongs to the paired homeobox family. Bicoid subfamily.

It is found in the nucleus. Its function is as follows. Regulates chordin (CHRD). May play a role in spatial programing within discrete embryonic fields or lineage compartments during organogenesis. In concert with NKX3-2, plays a role in defining the structural components of the middle ear; required for the development of the entire tympanic ring. Probably involved in the regulatory networks that define neural crest cell fate specification and determine mesoderm cell lineages in mammals. This Pongo pygmaeus (Bornean orangutan) protein is Homeobox protein goosecoid (GSC).